The chain runs to 103 residues: Co-chaperonin GroES (103 aa).

Belongs to the GroES chaperonin family. In terms of assembly, heptamer of 7 subunits arranged in a ring. Interacts with the chaperonin GroEL.

The protein resides in the cytoplasm. Its function is as follows. Together with the chaperonin GroEL, plays an essential role in assisting protein folding. The GroEL-GroES system forms a nano-cage that allows encapsulation of the non-native substrate proteins and provides a physical environment optimized to promote and accelerate protein folding. GroES binds to the apical surface of the GroEL ring, thereby capping the opening of the GroEL channel. In Synechococcus sp. (strain CC9311), this protein is Co-chaperonin GroES.